We begin with the raw amino-acid sequence, 671 residues long: DNA ligase (671 aa).

Residues 32–36 (DAEYD), 81–82 (SL), and Glu113 contribute to the NAD(+) site. The N6-AMP-lysine intermediate role is filled by Lys115. NAD(+) contacts are provided by Arg136, Glu173, Lys290, and Lys314. The Zn(2+) site is built by Cys408, Cys411, Cys426, and Cys432. One can recognise a BRCT domain in the interval 593 to 671 (EIDSPFAGKT…EAEMIRLLGA (79 aa)).

This sequence belongs to the NAD-dependent DNA ligase family. LigA subfamily. It depends on Mg(2+) as a cofactor. Mn(2+) is required as a cofactor.

It catalyses the reaction NAD(+) + (deoxyribonucleotide)n-3'-hydroxyl + 5'-phospho-(deoxyribonucleotide)m = (deoxyribonucleotide)n+m + AMP + beta-nicotinamide D-nucleotide.. Functionally, DNA ligase that catalyzes the formation of phosphodiester linkages between 5'-phosphoryl and 3'-hydroxyl groups in double-stranded DNA using NAD as a coenzyme and as the energy source for the reaction. It is essential for DNA replication and repair of damaged DNA. This Salmonella paratyphi A (strain ATCC 9150 / SARB42) protein is DNA ligase.